A 211-amino-acid polypeptide reads, in one-letter code: dITP/XTP pyrophosphatase (211 aa).

Residue threonine 7–lysine 12 participates in substrate binding. Mg(2+)-binding residues include glutamate 43 and aspartate 72. Aspartate 72 functions as the Proton acceptor in the catalytic mechanism. Substrate contacts are provided by residues serine 73, phenylalanine 169–aspartate 172, lysine 190, and histidine 195–arginine 196.

Belongs to the HAM1 NTPase family. Homodimer. Requires Mg(2+) as cofactor.

The enzyme catalyses XTP + H2O = XMP + diphosphate + H(+). The catalysed reaction is dITP + H2O = dIMP + diphosphate + H(+). It carries out the reaction ITP + H2O = IMP + diphosphate + H(+). Functionally, pyrophosphatase that catalyzes the hydrolysis of nucleoside triphosphates to their monophosphate derivatives, with a high preference for the non-canonical purine nucleotides XTP (xanthosine triphosphate), dITP (deoxyinosine triphosphate) and ITP. Seems to function as a house-cleaning enzyme that removes non-canonical purine nucleotides from the nucleotide pool, thus preventing their incorporation into DNA/RNA and avoiding chromosomal lesions. The chain is dITP/XTP pyrophosphatase from Hydrogenobaculum sp. (strain Y04AAS1).